The primary structure comprises 78 residues: Large ribosomal subunit protein eL38 (78 aa).

It belongs to the eukaryotic ribosomal protein eL38 family. As to quaternary structure, component of the large ribosomal subunit (LSU). Mature yeast ribosomes consist of a small (40S) and a large (60S) subunit. The 40S small subunit contains 1 molecule of ribosomal RNA (18S rRNA) and 33 different proteins (encoded by 57 genes). The large 60S subunit contains 3 rRNA molecules (25S, 5.8S and 5S rRNA) and 46 different proteins (encoded by 81 genes).

Its subcellular location is the cytoplasm. In terms of biological role, component of the ribosome, a large ribonucleoprotein complex responsible for the synthesis of proteins in the cell. The small ribosomal subunit (SSU) binds messenger RNAs (mRNAs) and translates the encoded message by selecting cognate aminoacyl-transfer RNA (tRNA) molecules. The large subunit (LSU) contains the ribosomal catalytic site termed the peptidyl transferase center (PTC), which catalyzes the formation of peptide bonds, thereby polymerizing the amino acids delivered by tRNAs into a polypeptide chain. The nascent polypeptides leave the ribosome through a tunnel in the LSU and interact with protein factors that function in enzymatic processing, targeting, and the membrane insertion of nascent chains at the exit of the ribosomal tunnel. The sequence is that of Large ribosomal subunit protein eL38 from Saccharomyces cerevisiae (strain ATCC 204508 / S288c) (Baker's yeast).